A 414-amino-acid chain; its full sequence is MVSTFSRKNQNYKKDDLNQPSKDGRFGKYGGQYVPETLMPALFELETAASNAWKDKLFVKELNHLLKTYVGRETPLYEAKRLTEYYKTKKAIPKIWLKREDLNHTGAHKINNALGQALLAIRMGKKRIIAETGAGQHGVATATVCARFGLKCIIYMGAEDIKRQSLNVFRMKLLGAEVKVVNSGTATLKDATSEAIRDWVSNVESTHYILGSVAGPHPFPKIVRDFHAVIGEETKKQCLESFGSLPDILLACVGGGSNAMGLFHPFVKETSVRLIGVEAAGGGVDTDKHAATITKGSVGILHGSMSLLLQDDNGQVQEAHSISAGLDYPGVGPEHSHLKDIGRAEYGSVTDQEALDSLRLVSELEGIIPALETSHAFAWLDKLCPTLEKDTHIVINCSGRGDKDVNTVASSLDI.

Residues 1–26 form a disordered region; that stretch reads MVSTFSRKNQNYKKDDLNQPSKDGRF. Over residues 12–26 the composition is skewed to basic and acidic residues; the sequence is YKKDDLNQPSKDGRF. An N6-(pyridoxal phosphate)lysine modification is found at lysine 109.

This sequence belongs to the TrpB family. As to quaternary structure, tetramer of two alpha and two beta chains. The cofactor is pyridoxal 5'-phosphate.

The catalysed reaction is (1S,2R)-1-C-(indol-3-yl)glycerol 3-phosphate + L-serine = D-glyceraldehyde 3-phosphate + L-tryptophan + H2O. It participates in amino-acid biosynthesis; L-tryptophan biosynthesis; L-tryptophan from chorismate: step 5/5. Its function is as follows. The beta subunit is responsible for the synthesis of L-tryptophan from indole and L-serine. The protein is Tryptophan synthase beta chain of Prochlorococcus marinus (strain MIT 9215).